Reading from the N-terminus, the 1559-residue chain is Fatty acid synthase alpha subunit stcJ (1559 aa).

Residues 68 to 147 enclose the Carrier domain; sequence DTPLTAIFII…AALGEVSLGP (80 aa). Ser106 is modified (O-(pantetheine 4'-phosphoryl)serine). Residues 457-693 are ketoreductase (KR) domain; sequence NHTYLITGAG…SLLLTPQLAT (237 aa). One can recognise a Ketosynthase family 3 (KS3) domain in the interval 873 to 1327; the sequence is REVFQEIVLE…QKEAQLVGVH (455 aa). The active-site For beta-ketoacyl synthase activity is the Cys1058. Positions 1105-1117 are enriched in basic and acidic residues; sequence VRDEQARGREPGE. The interval 1105-1125 is disordered; that stretch reads VRDEQARGREPGEMSRPTAAS. Residues His1212 and His1253 each act as for beta-ketoacyl synthase activity in the active site. Asp1432 is a binding site for Mg(2+). Acetyl-CoA-binding positions include 1432–1434, 1480–1490, 1504–1506, and 1532–1534; these read DTV, EAVFKCLQTVS, RVQ, and LSY. Position 1533 (Ser1533) interacts with Mg(2+).

It belongs to the thiolase-like superfamily. Fungal fatty acid synthetase subunit alpha family. As to quaternary structure, [Alpha(6)beta(6)] hexamers of two multifunctional subunits (alpha and beta).

It carries out the reaction acetyl-CoA + n malonyl-CoA + 2n NADPH + 4n H(+) = a long-chain-acyl-CoA + n CoA + n CO2 + 2n NADP(+).. It catalyses the reaction a fatty acyl-[ACP] + malonyl-[ACP] + H(+) = a 3-oxoacyl-[ACP] + holo-[ACP] + CO2. The enzyme catalyses a (3R)-hydroxyacyl-[ACP] + NADP(+) = a 3-oxoacyl-[ACP] + NADPH + H(+). It functions in the pathway mycotoxin biosynthesis; sterigmatocystin biosynthesis. In terms of biological role, fatty acid synthase alpha subunit; part of the gene cluster that mediates the biosynthesis of sterigmatocystin (ST), a polyketide-derived furanocoumarin which is part of the most toxic and carcinogenic compounds among the known mycotoxins. The first step in the biosynthesis of sterigmatocystin is the production of hexanoate by the fatty acid synthase (FAS) units stcJ and stcK. The polyketide backbone is assembled by the non-reducing polyketide synthase stcA by condensation of the starter hexanoyl-CoA and 7 malonyl-CoA extender units followed by cyclization and release of norsolorinic acid. Norsolorinic acid is the first stable intermediate in the biosynthesis of sterigmatocystin and is converted into averantin (AVN) by the ketoreductase stcE which reduces the hexanoate ketone to an alcohol. Averantin is then oxidized into 5'-hydroxyaverantin (HAVN) by the cytochrome P450 monooxygenase stcF. 5'-hydroxyaverantin is further converted to 5'-oxyaverantin (OAVN) by the 5'-hydroxyaverantin dehydrogenase stcG. The next step is the conversion of OAVN into averufin (AVF) which is catalyzed by a yet to be identified enzyme. The cytochrome P450 monooxygenase stcB and the flavin-binding monooxygenase stcW are both required for the conversion of averufin to 1-hydroxyversicolorone. The esterase stcI probably catalyzes the formation of versiconal hemiacetal acetate from 1-hydroxyversicolorone. The oxydoreductase stcN then probably catalyzes the biosynthetic step from versiconal to versicolorin B (VERB). The next step is performed by the versicolorin B desaturase stcL to produce versicolorin A (VERA). The ketoreductase stcU and the cytochrome P450 monooxygenase stcS are involved in the conversion of versicolorin A to demethylsterigmatocystin. The Baeyer-Villiger oxidas stcQ and the reductase stcR might be involved in the biosynthetic step from versicolorin A to demethylsterigmatocystin. The final step in the biosynthesis of sterigmatocystin is the methylation of demethylsterigmatocystin catalyzed by the methyltransferase stcP. The chain is Fatty acid synthase alpha subunit stcJ from Emericella nidulans (strain FGSC A4 / ATCC 38163 / CBS 112.46 / NRRL 194 / M139) (Aspergillus nidulans).